Reading from the N-terminus, the 150-residue chain is SPbeta prophage-derived uncharacterized protein YoqH (150 aa).

Residues 1–23 (MKRFILVLSFLSIIVAYPIQTNA) form the signal peptide.

The protein is SPbeta prophage-derived uncharacterized protein YoqH (yoqH) of Bacillus subtilis (strain 168).